A 579-amino-acid polypeptide reads, in one-letter code: Membrane frizzled-related protein (579 aa).

The Cytoplasmic segment spans residues 1–69 (MKDFSDVILC…RPDCRFSWLC (69 aa)). A helical; Signal-anchor for type II membrane protein membrane pass occupies residues 70-90 (VLLLSSLLLLLLGLLVAIILA). Residues 91-579 (QLQAAPPSGA…AADLEACAQP (489 aa)) lie on the Extracellular side of the membrane. Positions 100–143 (ASHSPLPAGGLTTTTTTPTITTSQAAGTPKGQQESGVSPSPQST) are disordered. The segment covering 111 to 121 (TTTTTTPTITT) has biased composition (low complexity). The span at 122–143 (SQAAGTPKGQQESGVSPSPQST) shows a compositional bias: polar residues. 2 disulfides stabilise this stretch: cysteine 144-cysteine 170 and cysteine 197-cysteine 216. In terms of domain architecture, CUB 1 spans 144–253 (CGGLLSGPRG…FGFHAWYQAM (110 aa)). An N-linked (GlcNAc...) asparagine glycan is attached at asparagine 227. The LDL-receptor class A 1 domain maps to 259–295 (SCAHDEFRCDQLICLLPDSVCDGFANCADGSDETNCS). Cystine bridges form between cysteine 260-cysteine 272, cysteine 267-cysteine 285, cysteine 279-cysteine 294, cysteine 301-cysteine 327, and cysteine 354-cysteine 377. One can recognise a CUB 2 domain in the interval 301-414 (CGGNLTGLQG…GGFSATYLAF (114 aa)). An N-linked (GlcNAc...) asparagine glycan is attached at asparagine 415. In terms of domain architecture, LDL-receptor class A 2 spans 420-455 (PCGPSELSCQAGGCKGVQWMCDMWRDCTDGSDDNCS). 8 disulfide bridges follow: cysteine 421/cysteine 433, cysteine 428/cysteine 446, cysteine 440/cysteine 454, cysteine 466/cysteine 528, cysteine 474/cysteine 521, cysteine 512/cysteine 549, cysteine 538/cysteine 576, and cysteine 542/cysteine 564. The region spanning 461–579 (PPELACEPVQ…AADLEACAQP (119 aa)) is the FZ domain.

As to quaternary structure, interacts with C1QTNF5. As to expression, specifically expressed in brain. Strongly expressed in medulla oblongata and to a lower extent in hippocampus and corpus callosum. Expressed in keratinocytes.

Its subcellular location is the apical cell membrane. Its function is as follows. May play a role in eye development. The sequence is that of Membrane frizzled-related protein (MFRP) from Homo sapiens (Human).